A 510-amino-acid polypeptide reads, in one-letter code: NAD(P)H-quinone oxidoreductase subunit 2 A, chloroplastic (510 aa).

The next 13 membrane-spanning stretches (helical) occupy residues 26–46 (LFDG…ILLL), 57–77 (IPWF…ALLF), 99–119 (IFQF…VEYI), 124–144 (MAIT…MFLC), 149–169 (LITI…LSGY), 183–203 (YLLM…WLYG), 227–247 (PGIS…LSPA), 295–315 (WHPL…LIAI), 323–342 (MLAY…IIVG), 354–374 (YMLF…LFGL), 395–415 (ALSL…AGFF), 418–438 (LHLF…IGLF), and 484–504 (MIVC…IIAI).

Belongs to the complex I subunit 2 family. NDH is composed of at least 16 different subunits, 5 of which are encoded in the nucleus.

It is found in the plastid. The protein localises to the chloroplast thylakoid membrane. It carries out the reaction a plastoquinone + NADH + (n+1) H(+)(in) = a plastoquinol + NAD(+) + n H(+)(out). The catalysed reaction is a plastoquinone + NADPH + (n+1) H(+)(in) = a plastoquinol + NADP(+) + n H(+)(out). NDH shuttles electrons from NAD(P)H:plastoquinone, via FMN and iron-sulfur (Fe-S) centers, to quinones in the photosynthetic chain and possibly in a chloroplast respiratory chain. The immediate electron acceptor for the enzyme in this species is believed to be plastoquinone. Couples the redox reaction to proton translocation, and thus conserves the redox energy in a proton gradient. This chain is NAD(P)H-quinone oxidoreductase subunit 2 A, chloroplastic, found in Oenothera biennis (German evening primrose).